We begin with the raw amino-acid sequence, 530 residues long: Phosphoenolpyruvate carboxykinase (ATP) (530 aa).

Residues arginine 58, tyrosine 195, and lysine 201 each coordinate substrate. Residues lysine 201, histidine 220, and 236–244 (GLSGTGKTT) contribute to the ATP site. Lysine 201 and histidine 220 together coordinate Mn(2+). Residue aspartate 257 coordinates Mn(2+). ATP-binding positions include glutamate 285, arginine 321, 440 to 441 (RI), and threonine 446. A substrate-binding site is contributed by arginine 321.

It belongs to the phosphoenolpyruvate carboxykinase (ATP) family. Mn(2+) serves as cofactor.

The protein localises to the cytoplasm. It catalyses the reaction oxaloacetate + ATP = phosphoenolpyruvate + ADP + CO2. Its pathway is carbohydrate biosynthesis; gluconeogenesis. In terms of biological role, involved in the gluconeogenesis. Catalyzes the conversion of oxaloacetate (OAA) to phosphoenolpyruvate (PEP) through direct phosphoryl transfer between the nucleoside triphosphate and OAA. The sequence is that of Phosphoenolpyruvate carboxykinase (ATP) from Staphylococcus aureus (strain MSSA476).